The chain runs to 275 residues: 3-methyl-2-oxobutanoate hydroxymethyltransferase (275 aa).

2 residues coordinate Mg(2+): Asp-44 and Asp-83. 3-methyl-2-oxobutanoate-binding positions include 44-45, Asp-83, and Lys-113; that span reads DS. A Mg(2+)-binding site is contributed by Glu-115. Catalysis depends on Glu-182, which acts as the Proton acceptor.

It belongs to the PanB family. Homodecamer; pentamer of dimers. Requires Mg(2+) as cofactor.

The protein resides in the cytoplasm. It carries out the reaction 3-methyl-2-oxobutanoate + (6R)-5,10-methylene-5,6,7,8-tetrahydrofolate + H2O = 2-dehydropantoate + (6S)-5,6,7,8-tetrahydrofolate. Its pathway is cofactor biosynthesis; (R)-pantothenate biosynthesis; (R)-pantoate from 3-methyl-2-oxobutanoate: step 1/2. Its function is as follows. Catalyzes the reversible reaction in which hydroxymethyl group from 5,10-methylenetetrahydrofolate is transferred onto alpha-ketoisovalerate to form ketopantoate. The polypeptide is 3-methyl-2-oxobutanoate hydroxymethyltransferase (Clostridium botulinum (strain Alaska E43 / Type E3)).